The primary structure comprises 752 residues: Polyribonucleotide nucleotidyltransferase (752 aa).

Mg(2+) contacts are provided by D542 and D548. The KH domain maps to P608–I667. Residues G679–V748 enclose the S1 motif domain.

The protein belongs to the polyribonucleotide nucleotidyltransferase family. Mg(2+) is required as a cofactor.

It localises to the cytoplasm. It carries out the reaction RNA(n+1) + phosphate = RNA(n) + a ribonucleoside 5'-diphosphate. Involved in mRNA degradation. Catalyzes the phosphorolysis of single-stranded polyribonucleotides processively in the 3'- to 5'-direction. This is Polyribonucleotide nucleotidyltransferase from Corynebacterium efficiens (strain DSM 44549 / YS-314 / AJ 12310 / JCM 11189 / NBRC 100395).